An 874-amino-acid polypeptide reads, in one-letter code: Bifunctional apolipoprotein N-acyltransferase/polyprenol monophosphomannose synthase (874 aa).

The apolipoprotein N-acyltransferase stretch occupies residues 1-593 (MKLGAWVAAQ…GRHRATSRSY (593 aa)). 5 helical membrane-spanning segments follow: residues 23-42 (TRLVVSIVAGLLLYASFPPR), 72-89 (YGLLFGLVFYVSLLPWIG), 94-115 (PGPWLALATTCALFPGIFGLFA), 177-194 (VALVGCGLTAIALEIEKW), and 206-223 (AVVLPAACICLVLFAAIV). The CN hydrolase domain maps to 241–497 (VTVAVVQGNV…PAYLDSQVRL (257 aa)). E294 (proton acceptor) is an active-site residue. K359 is a catalytic residue. Catalysis depends on C409, which acts as the Nucleophile. The helical transmembrane segment at 509–526 (PILQWILVGAAAAVVLVA) threads the bilayer. 2 disordered regions span residues 533-609 (FPRP…NRPS) and 852-874 (RARPDIARPGAGGSRVSRADVTE). The polyprenol monophosphomannose synthase stretch occupies residues 594–874 (MTTGQPAPPA…SRVSRADVTE (281 aa)).

This sequence in the N-terminal section; belongs to the CN hydrolase family. Apolipoprotein N-acyltransferase subfamily. It in the C-terminal section; belongs to the glycosyltransferase 2 family.

It localises to the cell membrane. The catalysed reaction is N-terminal S-1,2-diacyl-sn-glyceryl-L-cysteinyl-[lipoprotein] + a glycerophospholipid = N-acyl-S-1,2-diacyl-sn-glyceryl-L-cysteinyl-[lipoprotein] + a 2-acyl-sn-glycero-3-phospholipid + H(+). It carries out the reaction a di-trans,poly-cis-dolichyl phosphate + GDP-alpha-D-mannose = a di-trans,poly-cis-dolichyl beta-D-mannosyl phosphate + GDP. It functions in the pathway protein modification; lipoprotein biosynthesis (N-acyl transfer). In terms of biological role, catalyzes the phospholipid dependent N-acylation of the N-terminal cysteine of apolipoprotein, the last step in lipoprotein maturation. Functionally, transfers mannose from GDP-mannose to lipid acceptors to form polyprenol monophosphomannose (PPM). PMM is an alkai-stable sugar donor which adds mannose-phosphate residues to triacylated-phosphatidyl-myo-inositol mannosides (PIM2), eventually leading to generation of the cell wall glycolipid lipoglycan modulins lipoarabinomannan (LAM) and lipomannan (LM). This chain is Bifunctional apolipoprotein N-acyltransferase/polyprenol monophosphomannose synthase, found in Mycobacterium bovis (strain BCG / Pasteur 1173P2).